The sequence spans 78 residues: Acyl carrier protein (78 aa).

The Carrier domain maps to 2–77 (SNFEERVKKI…AAIDYVVSSA (76 aa)). Residue S37 is modified to O-(pantetheine 4'-phosphoryl)serine.

Belongs to the acyl carrier protein (ACP) family. Post-translationally, 4'-phosphopantetheine is transferred from CoA to a specific serine of apo-ACP by AcpS. This modification is essential for activity because fatty acids are bound in thioester linkage to the sulfhydryl of the prosthetic group.

The protein localises to the cytoplasm. It participates in lipid metabolism; fatty acid biosynthesis. Carrier of the growing fatty acid chain in fatty acid biosynthesis. Is probably involved in the biosynthesis of docosahexaenoic acid (DHA) which is produced by this bacterium as a fatty acyl component in its membrane lipid. This is Acyl carrier protein from Moritella marina (Vibrio marinus).